The chain runs to 662 residues: UvrABC system protein B (662 aa).

The region spanning 31–188 (DNIEGGEKAQ…NDLVDIQFER (158 aa)) is the Helicase ATP-binding domain. 44-51 (GATGTGKT) contributes to the ATP binding site. The short motif at 97–120 (YYDYYQPEAYVPSSDTYIEKDSSV) is the Beta-hairpin element. In terms of domain architecture, Helicase C-terminal spans 435-601 (QIDDLLGEIN…TIKKEIRDLI (167 aa)). A UVR domain is found at 626 to 661 (KELVKKLEKQMQEAVEVLDFELAAQIRDMMLEVKAL).

The protein belongs to the UvrB family. Forms a heterotetramer with UvrA during the search for lesions. Interacts with UvrC in an incision complex.

The protein resides in the cytoplasm. Its function is as follows. The UvrABC repair system catalyzes the recognition and processing of DNA lesions. A damage recognition complex composed of 2 UvrA and 2 UvrB subunits scans DNA for abnormalities. Upon binding of the UvrA(2)B(2) complex to a putative damaged site, the DNA wraps around one UvrB monomer. DNA wrap is dependent on ATP binding by UvrB and probably causes local melting of the DNA helix, facilitating insertion of UvrB beta-hairpin between the DNA strands. Then UvrB probes one DNA strand for the presence of a lesion. If a lesion is found the UvrA subunits dissociate and the UvrB-DNA preincision complex is formed. This complex is subsequently bound by UvrC and the second UvrB is released. If no lesion is found, the DNA wraps around the other UvrB subunit that will check the other stand for damage. This Streptococcus pneumoniae serotype 2 (strain D39 / NCTC 7466) protein is UvrABC system protein B.